Reading from the N-terminus, the 289-residue chain is ATP synthase gamma chain (289 aa).

It belongs to the ATPase gamma chain family. F-type ATPases have 2 components, CF(1) - the catalytic core - and CF(0) - the membrane proton channel. CF(1) has five subunits: alpha(3), beta(3), gamma(1), delta(1), epsilon(1). CF(0) has three main subunits: a, b and c.

It is found in the cell membrane. Functionally, produces ATP from ADP in the presence of a proton gradient across the membrane. The gamma chain is believed to be important in regulating ATPase activity and the flow of protons through the CF(0) complex. The chain is ATP synthase gamma chain from Buchnera aphidicola subsp. Melaphis rhois.